A 262-amino-acid polypeptide reads, in one-letter code: Type III pantothenate kinase (262 aa).

An ATP-binding site is contributed by 6–13 (DVGNTNAV). Substrate contacts are provided by residues Y100 and 107 to 110 (GADR). D109 (proton acceptor) is an active-site residue. D129 contributes to the K(+) binding site. Position 132 (T132) interacts with ATP. T184 lines the substrate pocket.

It belongs to the type III pantothenate kinase family. In terms of assembly, homodimer. NH4(+) is required as a cofactor. It depends on K(+) as a cofactor.

Its subcellular location is the cytoplasm. The enzyme catalyses (R)-pantothenate + ATP = (R)-4'-phosphopantothenate + ADP + H(+). It participates in cofactor biosynthesis; coenzyme A biosynthesis; CoA from (R)-pantothenate: step 1/5. Its function is as follows. Catalyzes the phosphorylation of pantothenate (Pan), the first step in CoA biosynthesis. This Bacillus anthracis (strain A0248) protein is Type III pantothenate kinase.